The chain runs to 488 residues: Zinc metalloproteinase-disintegrin agkistin (488 aa).

The signal sequence occupies residues 1–20; the sequence is MIQVLLVTICLAVFPYQGSS. Residues 21–195 constitute a propeptide that is removed on maturation; it reads IILESGNVND…NFPPDGRIEF (175 aa). Positions 198 to 394 constitute a Peptidase M12B domain; the sequence is RYIELVIVAD…NPLASYCLYN (197 aa). Glu201 contributes to the Ca(2+) binding site. N-linked (GlcNAc...) asparagine glycosylation occurs at Asn258. Position 285 (Asp285) interacts with Ca(2+). Intrachain disulfides connect Cys309-Cys391, Cys349-Cys373, and Cys351-Cys356. His334 contacts Zn(2+). The active site involves Glu335. The Zn(2+) site is built by His338 and His344. Ca(2+) contacts are provided by Cys391, Asn394, Val406, Asn409, Glu413, Glu416, and Asp419. In terms of domain architecture, Disintegrin spans 404–488; the sequence is PPVCGNYYLE…AGCPRNPSHA (85 aa). Disulfide bonds link Cys407–Cys426, Cys418–Cys436, Cys420–Cys431, Cys430–Cys453, Cys444–Cys450, Cys449–Cys474, and Cys462–Cys481. The Cell attachment site motif lies at 466–468; that stretch reads RGD.

Belongs to the venom metalloproteinase (M12B) family. P-II subfamily. P-IIb sub-subfamily. Monomer. Zn(2+) is required as a cofactor. Expressed by the venom gland.

It localises to the secreted. In terms of biological role, inhibits ADP-induced human platelet aggregation, inhibits bovine aortic endothelial cells (BAEC) migration, has anti-angiogenic activity and induces BAEC and human micro-vascular endothelial cell (HMEC) apoptosis. The metalloproteinase domain may act in hemorrhage. This Gloydius halys (Chinese water mocassin) protein is Zinc metalloproteinase-disintegrin agkistin.